Reading from the N-terminus, the 141-residue chain is Endoribonuclease YbeY (141 aa).

Residues H105, H109, and D115 each contribute to the Zn(2+) site.

Belongs to the endoribonuclease YbeY family. Requires Zn(2+) as cofactor.

The protein resides in the cytoplasm. Functionally, single strand-specific metallo-endoribonuclease involved in late-stage 70S ribosome quality control and in maturation of the 3' terminus of the 16S rRNA. The chain is Endoribonuclease YbeY from Chlorobaculum parvum (strain DSM 263 / NCIMB 8327) (Chlorobium vibrioforme subsp. thiosulfatophilum).